The primary structure comprises 184 residues: Shikimate kinase (184 aa).

Position 17–22 (Gly17–Thr22) interacts with ATP. Thr21 is a binding site for Mg(2+). Asp39, Arg63, and Gly85 together coordinate substrate. Arg123 provides a ligand contact to ATP. Arg142 is a binding site for substrate.

It belongs to the shikimate kinase family. In terms of assembly, monomer. The cofactor is Mg(2+).

It localises to the cytoplasm. The catalysed reaction is shikimate + ATP = 3-phosphoshikimate + ADP + H(+). It functions in the pathway metabolic intermediate biosynthesis; chorismate biosynthesis; chorismate from D-erythrose 4-phosphate and phosphoenolpyruvate: step 5/7. Catalyzes the specific phosphorylation of the 3-hydroxyl group of shikimic acid using ATP as a cosubstrate. This Burkholderia lata (strain ATCC 17760 / DSM 23089 / LMG 22485 / NCIMB 9086 / R18194 / 383) protein is Shikimate kinase.